Consider the following 355-residue polypeptide: Arginine kinase (355 aa).

One can recognise a Phosphagen kinase N-terminal domain in the interval 6-90 (TLEKLEAGFS…FDPIIEDYHN (85 aa)). 63–67 (GVGIY) is a substrate binding site. Residues 118 to 355 (FVVSTRVRCG…AELIKIEKSL (238 aa)) form the Phosphagen kinase C-terminal domain. Residues 121 to 125 (STRVR) and histidine 184 contribute to the ATP site. Glutamate 224 contacts substrate. ATP is bound at residue arginine 228. Substrate is bound at residue cysteine 270. ATP-binding positions include 279-283 (RASVH) and 308-313 (RGTRGE). Glutamate 313 provides a ligand contact to substrate.

The protein belongs to the ATP:guanido phosphotransferase family.

It carries out the reaction L-arginine + ATP = N(omega)-phospho-L-arginine + ADP + H(+). The polypeptide is Arginine kinase (ARGK) (Plodia interpunctella (Indianmeal moth)).